We begin with the raw amino-acid sequence, 78 residues long: DNA-directed RNA polymerase subunit Rpo5 (78 aa).

Belongs to the archaeal Rpo5/eukaryotic RPB5 RNA polymerase subunit family. In terms of assembly, part of the RNA polymerase complex.

The protein localises to the cytoplasm. The catalysed reaction is RNA(n) + a ribonucleoside 5'-triphosphate = RNA(n+1) + diphosphate. In terms of biological role, DNA-dependent RNA polymerase (RNAP) catalyzes the transcription of DNA into RNA using the four ribonucleoside triphosphates as substrates. This is DNA-directed RNA polymerase subunit Rpo5 from Methanococcus maripaludis (strain C7 / ATCC BAA-1331).